Reading from the N-terminus, the 388-residue chain is Interferon alpha/beta receptor 1b (388 aa).

Fibronectin type-III domains are found at residues 5–102 and 109–211; these read LPQP…FCPD and PPSR…TEGD. The chain crosses the membrane as a helical span at residues 217–237; it reads IFLYFLVSMMVCFLLVLLSSY. A disordered region spans residues 308–357; it reads TAPPSELEQDSGRHIRQDSGDSGIYSTEGGSAQQGRSGGEPIRRDQEVDS. The span at 317–326 shows a compositional bias: basic and acidic residues; it reads DSGRHIRQDS. Positions 331–342 are enriched in polar residues; the sequence is IYSTEGGSAQQG.

It belongs to the type II cytokine receptor family. As to quaternary structure, heterodimer with IFNAR2; forming the receptor for type I interferon.

It localises to the cell membrane. The protein resides in the cytoplasm. The protein localises to the perinuclear region. Functionally, together with IFNAR2, forms the heterodimeric receptor for type I interferons (including interferons alpha, beta, epsilon, omega and kappa). Type I interferon binding activates the JAK-STAT signaling cascade, resulting in transcriptional activation or repression of interferon-regulated genes that encode the effectors of the interferon response. Mechanistically, type I interferon-binding brings the IFNAR1 and IFNAR2 subunits into close proximity with one another, driving their associated Janus kinases (JAKs) (TYK2 bound to IFNAR1 and JAK1 bound to IFNAR2) to cross-phosphorylate one another. The activated kinases phosphorylate specific tyrosine residues on the intracellular domains of IFNAR1 and IFNAR2, forming docking sites for the STAT transcription factors. STAT proteins are then phosphorylated by the JAKs, promoting their translocation into the nucleus to regulate expression of interferon-regulated genes. The sequence is that of Interferon alpha/beta receptor 1b from Oncorhynchus mykiss (Rainbow trout).